A 517-amino-acid chain; its full sequence is Urethanase (517 aa).

Residues Lys-98 and Ser-173 each act as charge relay system in the active site. Residue Ser-197 is the Acyl-ester intermediate of the active site.

This sequence belongs to the amidase family. In terms of assembly, homooctamer.

The enzyme catalyses urethane + H2O + H(+) = ethanol + NH4(+) + CO2. Its activity is regulated as follows. Exhibits poor salt tolerance but excellent tolerance to low concentrations of ethanol. EDTA has almost no impact on activity. Activity is increased in the presence of Ca(2+), Mg(2+) and Co(3+) and inhibited in the presence of Al(3+), Zn(2+) and Cu(2+). In terms of biological role, hydrolase that can catalyze the degradation of ethyl carbamate (also called urethane), a probable human carcinogen widely found in alcoholic beverages. Can also use methyl carbamate, butyl carbamate, acetamide and urea. Also catalyzes the enantioselective hydrolysis of 2-phenylpropionamide, alpha-chlorophenylacetamide, 2-methyl-3-phenylpropionamide and alpha-methoxyphenylacetamide to the corresponding acids. Is inactive on benzamide and L-glutamine. The chain is Urethanase from Rhizobium radiobacter (Agrobacterium tumefaciens).